The sequence spans 166 residues: FMN reductase (NADH) RutF (166 aa).

It belongs to the non-flavoprotein flavin reductase family. RutF subfamily.

It carries out the reaction FMNH2 + NAD(+) = FMN + NADH + 2 H(+). Functionally, catalyzes the reduction of FMN to FMNH2 which is used to reduce pyrimidine by RutA via the Rut pathway. The polypeptide is FMN reductase (NADH) RutF (Cronobacter turicensis (strain DSM 18703 / CCUG 55852 / LMG 23827 / z3032)).